The chain runs to 406 residues: Bifunctional enzyme IspD/IspF (406 aa).

The 2-C-methyl-D-erythritol 4-phosphate cytidylyltransferase stretch occupies residues 1–247 (MSLIRVNGEA…ALFFNPAKDT (247 aa)). Residues 248 to 406 (FIGMGFDTHA…HVSMRYKQKL (159 aa)) are 2-C-methyl-D-erythritol 2,4-cyclodiphosphate synthase. A divalent metal cation contacts are provided by Asp-254 and His-256. 4-CDP-2-C-methyl-D-erythritol 2-phosphate is bound by residues 254–256 (DTH) and 280–281 (HS). His-288 is an a divalent metal cation binding site. Residues 302–304 (DIG), 307–311 (FPDND), 378–381 (TTME), Phe-385, and Lys-388 each bind 4-CDP-2-C-methyl-D-erythritol 2-phosphate.

In the N-terminal section; belongs to the IspD/TarI cytidylyltransferase family. IspD subfamily. The protein in the C-terminal section; belongs to the IspF family. Requires a divalent metal cation as cofactor.

The catalysed reaction is 2-C-methyl-D-erythritol 4-phosphate + CTP + H(+) = 4-CDP-2-C-methyl-D-erythritol + diphosphate. The enzyme catalyses 4-CDP-2-C-methyl-D-erythritol 2-phosphate = 2-C-methyl-D-erythritol 2,4-cyclic diphosphate + CMP. Its pathway is isoprenoid biosynthesis; isopentenyl diphosphate biosynthesis via DXP pathway; isopentenyl diphosphate from 1-deoxy-D-xylulose 5-phosphate: step 2/6. It participates in isoprenoid biosynthesis; isopentenyl diphosphate biosynthesis via DXP pathway; isopentenyl diphosphate from 1-deoxy-D-xylulose 5-phosphate: step 4/6. Bifunctional enzyme that catalyzes the formation of 4-diphosphocytidyl-2-C-methyl-D-erythritol from CTP and 2-C-methyl-D-erythritol 4-phosphate (MEP) (IspD), and catalyzes the conversion of 4-diphosphocytidyl-2-C-methyl-D-erythritol 2-phosphate (CDP-ME2P) to 2-C-methyl-D-erythritol 2,4-cyclodiphosphate (ME-CPP) with a corresponding release of cytidine 5-monophosphate (CMP) (IspF). The polypeptide is Bifunctional enzyme IspD/IspF (Helicobacter pylori (strain Shi470)).